A 401-amino-acid chain; its full sequence is MKEKIVLAYSGGLDTSVAVQWLIDKGYDVVACCLDVGEGKDLDIVYKKALDTGAIECHIIDATKEFSDEYVSYAIKGNLMYENAYPLFSALSRPLIAKKLVEIAEKTNSVGIAHGCTGKGNDQVRFEVAIKALNPSLKAFAPVREWAWSREEEIDYAIKHNIPVSINHDSPYSIDQNLWGRANECGILEDPYAAPPEDAFDLTNALEETPDTADEIILTFVKGIPVQIDGKTYELDDLILTLNALAGKHGIGRIDHVENRLVGIKSREIYEAPAAEVILKAHKALETITLTKDVAHFKPIIEKQFAEQLYNGLWFSPLTDSLKLFIDSTQQYVSGDVRIKLFKGNAIVNGRKSPYTLYDEKLATYTKEDAFNQDAAVGFIDIYGLPTQVNAMLNGGYSNEQ.

8–16 (AYSGGLDTS) contributes to the ATP binding site. Y85 contacts L-citrulline. Position 115 (G115) interacts with ATP. L-aspartate is bound by residues T117, N121, and D122. Residue N121 coordinates L-citrulline. L-citrulline-binding residues include R125, S173, E258, and Y270.

The protein belongs to the argininosuccinate synthase family. Type 1 subfamily. Homotetramer.

It localises to the cytoplasm. It catalyses the reaction L-citrulline + L-aspartate + ATP = 2-(N(omega)-L-arginino)succinate + AMP + diphosphate + H(+). It participates in amino-acid biosynthesis; L-arginine biosynthesis; L-arginine from L-ornithine and carbamoyl phosphate: step 2/3. This is Argininosuccinate synthase from Staphylococcus aureus (strain bovine RF122 / ET3-1).